The sequence spans 279 residues: Acetylglutamate kinase (279 aa).

Residues 64–65, Arg86, and Asn177 contribute to the substrate site; that span reads GG.

Belongs to the acetylglutamate kinase family. ArgB subfamily.

The protein resides in the cytoplasm. The catalysed reaction is N-acetyl-L-glutamate + ATP = N-acetyl-L-glutamyl 5-phosphate + ADP. The protein operates within amino-acid biosynthesis; L-arginine biosynthesis; N(2)-acetyl-L-ornithine from L-glutamate: step 2/4. Catalyzes the ATP-dependent phosphorylation of N-acetyl-L-glutamate. The chain is Acetylglutamate kinase from Campylobacter jejuni subsp. jejuni serotype O:23/36 (strain 81-176).